We begin with the raw amino-acid sequence, 404 residues long: Cysteine desulfurase IscS (404 aa).

Pyridoxal 5'-phosphate is bound by residues 73–74 (AT), Asn153, Gln181, and 201–203 (SAH). At Lys204 the chain carries N6-(pyridoxal phosphate)lysine. Thr241 serves as a coordination point for pyridoxal 5'-phosphate. Residue Cys327 is the Cysteine persulfide intermediate of the active site. Cys327 lines the [2Fe-2S] cluster pocket.

The protein belongs to the class-V pyridoxal-phosphate-dependent aminotransferase family. NifS/IscS subfamily. As to quaternary structure, homodimer. Forms a heterotetramer with IscU, interacts with other sulfur acceptors. It depends on pyridoxal 5'-phosphate as a cofactor.

Its subcellular location is the cytoplasm. It carries out the reaction (sulfur carrier)-H + L-cysteine = (sulfur carrier)-SH + L-alanine. Its pathway is cofactor biosynthesis; iron-sulfur cluster biosynthesis. Its function is as follows. Master enzyme that delivers sulfur to a number of partners involved in Fe-S cluster assembly, tRNA modification or cofactor biosynthesis. Catalyzes the removal of elemental sulfur atoms from cysteine to produce alanine. Functions as a sulfur delivery protein for Fe-S cluster synthesis onto IscU, an Fe-S scaffold assembly protein, as well as other S acceptor proteins. This chain is Cysteine desulfurase IscS, found in Anaeromyxobacter sp. (strain K).